The following is a 415-amino-acid chain: Glutamyl-tRNA reductase (415 aa).

Substrate is bound by residues Thr49–Arg52, Ser104, Glu109–Gln111, and Gln115. Cys50 acts as the Nucleophile in catalysis. Gly184–Ile189 provides a ligand contact to NADP(+).

It belongs to the glutamyl-tRNA reductase family. Homodimer.

It carries out the reaction (S)-4-amino-5-oxopentanoate + tRNA(Glu) + NADP(+) = L-glutamyl-tRNA(Glu) + NADPH + H(+). Its pathway is porphyrin-containing compound metabolism; protoporphyrin-IX biosynthesis; 5-aminolevulinate from L-glutamyl-tRNA(Glu): step 1/2. Functionally, catalyzes the NADPH-dependent reduction of glutamyl-tRNA(Glu) to glutamate 1-semialdehyde (GSA). The sequence is that of Glutamyl-tRNA reductase from Neisseria meningitidis serogroup B (strain ATCC BAA-335 / MC58).